A 377-amino-acid chain; its full sequence is Chaperone protein DnaJ (377 aa).

The region spanning 5 to 70 (DYYQVLGVSR…KKRSAYDQLG (66 aa)) is the J domain. The CR-type zinc-finger motif lies at 138 to 216 (GVTKIISFKT…CYGEGRYINT (79 aa)). Residues Cys-151, Cys-154, Cys-168, Cys-171, Cys-190, Cys-193, Cys-204, and Cys-207 each coordinate Zn(2+). CXXCXGXG motif repeat units follow at residues 151–158 (CDACAGKG), 168–175 (CPTCRGSG), 190–197 (CQTCRGAG), and 204–211 (CTKCYGEG).

Belongs to the DnaJ family. In terms of assembly, homodimer. Zn(2+) serves as cofactor.

It localises to the cytoplasm. Its function is as follows. Participates actively in the response to hyperosmotic and heat shock by preventing the aggregation of stress-denatured proteins and by disaggregating proteins, also in an autonomous, DnaK-independent fashion. Unfolded proteins bind initially to DnaJ; upon interaction with the DnaJ-bound protein, DnaK hydrolyzes its bound ATP, resulting in the formation of a stable complex. GrpE releases ADP from DnaK; ATP binding to DnaK triggers the release of the substrate protein, thus completing the reaction cycle. Several rounds of ATP-dependent interactions between DnaJ, DnaK and GrpE are required for fully efficient folding. Also involved, together with DnaK and GrpE, in the DNA replication of plasmids through activation of initiation proteins. The sequence is that of Chaperone protein DnaJ from Orientia tsutsugamushi (strain Boryong) (Rickettsia tsutsugamushi).